The sequence spans 752 residues: Multifunctional tryptophan biosynthesis protein (752 aa).

The 201-residue stretch at 23 to 223 (NVILIDNYDS…LELTAGTWDN (201 aa)) folds into the Glutamine amidotransferase type-1 domain. Residue 74 to 76 (GPG) participates in L-glutamine binding. Cysteine 102 acts as the Nucleophile; for GATase activity in catalysis. L-glutamine is bound by residues glutamine 106 and 152–153 (SL). Catalysis depends on for GATase activity residues histidine 197 and glutamate 199. The tract at residues 239–503 (ILDKIYAHRK…DTSAFVAQLL (265 aa)) is indole-3-glycerol phosphate synthase. Residues 519-752 (LVKICGTRTE…FVKSAKSIRQ (234 aa)) are N-(5'-phosphoribosyl)anthranilate isomerase.

The enzyme catalyses N-(5-phospho-beta-D-ribosyl)anthranilate = 1-(2-carboxyphenylamino)-1-deoxy-D-ribulose 5-phosphate. It catalyses the reaction 1-(2-carboxyphenylamino)-1-deoxy-D-ribulose 5-phosphate + H(+) = (1S,2R)-1-C-(indol-3-yl)glycerol 3-phosphate + CO2 + H2O. The catalysed reaction is chorismate + L-glutamine = anthranilate + pyruvate + L-glutamate + H(+). It participates in amino-acid biosynthesis; L-tryptophan biosynthesis; L-tryptophan from chorismate: step 1/5. Its pathway is amino-acid biosynthesis; L-tryptophan biosynthesis; L-tryptophan from chorismate: step 3/5. It functions in the pathway amino-acid biosynthesis; L-tryptophan biosynthesis; L-tryptophan from chorismate: step 4/5. Functionally, trifunctional enzyme bearing the Gln amidotransferase (GATase) domain of anthranilate synthase, indole-glycerolphosphate synthase, and phosphoribosylanthranilate isomerase activities. This Penicillium chrysogenum (Penicillium notatum) protein is Multifunctional tryptophan biosynthesis protein (trpC).